We begin with the raw amino-acid sequence, 687 residues long: Protein Smaug homolog 2 (687 aa).

The segment covering 160 to 172 (TRPEPSYHSRQGS) has biased composition (basic and acidic residues). The interval 160–301 (TRPEPSYHSR…NTFQEDGSGM (142 aa)) is disordered. Position 172 is a phosphoserine (S172). 2 stretches are compositionally biased toward low complexity: residues 175–190 (WGGP…GPGW) and 200–211 (HVPFHPSSSVPP). Over residues 215–224 (SIGSNANTGL) the composition is skewed to polar residues. Phosphoserine is present on residues S271, S278, S279, and S281. Residues 278–290 (SSGSEQTEEQGSS) are compositionally biased toward low complexity. The SAM domain occupies 299-372 (SGMKDVPSWL…LKSLEKDVLE (74 aa)). The residue at position 400 (T400) is a Phosphothreonine. The interval 402 to 464 (TAKDEGRGEP…APAPVADGDI (63 aa)) is disordered. The segment covering 424–435 (GSDKGTEAKDPP) has biased composition (basic and acidic residues). Residues 448 to 461 (PSDSSEPAPAPVAD) are compositionally biased toward low complexity. Phosphoserine occurs at positions 548, 550, 556, 585, and 593. R595 bears the Asymmetric dimethylarginine mark. The disordered stretch occupies residues 600–636 (SPSLGGQGRQNLWFANPGGSNSMPSQSRSSVQRTHSL). Residues 617–636 (GGSNSMPSQSRSSVQRTHSL) are compositionally biased toward polar residues. S621 carries the phosphoserine modification.

The protein belongs to the SMAUG family.

It localises to the cytoplasm. It is found in the nucleus. Its function is as follows. Has transcriptional repressor activity. Overexpression inhibits the transcriptional activities of AP-1, p53/TP53 and CDKN1A. The chain is Protein Smaug homolog 2 (Samd4b) from Mus musculus (Mouse).